Reading from the N-terminus, the 75-residue chain is Protein SlyX homolog (75 aa).

This sequence belongs to the SlyX family.

The chain is Protein SlyX homolog from Vibrio campbellii (strain ATCC BAA-1116).